A 1487-amino-acid polypeptide reads, in one-letter code: Protein clueless (1487 aa).

Disordered stretches follow at residues 1–94 (MALE…NGDA) and 110–140 (GATA…EAAA). Over residues 56–65 (TKKKGKKNRN) the composition is skewed to basic residues. Low complexity predominate over residues 111–126 (ATAAAGATEAAAEVGS). Residue Ser-284 is modified to Phosphoserine. In terms of domain architecture, Clu spans 438–680 (RAEDAFSSKL…RTFPPDVNFL (243 aa)). Positions 739–785 (QAEKELPSITEKQEEPEKEQAEKSSAEQPEKEKEKEKDKEDEQKESK) are enriched in basic and acidic residues. Disordered regions lie at residues 739 to 794 (QAEK…TKSA) and 980 to 1040 (VSSE…TAST). Over residues 988-1005 (KQSRNNGGKHNKHNKSNK) the composition is skewed to basic residues. Residues 1009–1019 (PQSTSAAAATQ) are compositionally biased toward polar residues. Low complexity predominate over residues 1020-1040 (NGHSSTAANGSANSAANTAST). TPR repeat units lie at residues 1140–1173 (AYNF…LNNV), 1266–1299 (ALID…NLKY), and 1301–1334 (GNKA…EKET). The disordered stretch occupies residues 1456–1487 (DTEQPKEGSEVEGATATQLTNGSEDSTTTVSS). Residues 1470–1487 (TATQLTNGSEDSTTTVSS) show a composition bias toward polar residues.

This sequence belongs to the CLU family.

The protein localises to the cytoplasm. Its function is as follows. mRNA-binding protein involved in proper cytoplasmic distribution of mitochondria. The chain is Protein clueless from Drosophila mojavensis (Fruit fly).